The following is a 236-amino-acid chain: Ubiquinone biosynthesis O-methyltransferase (236 aa).

Arg39, Gly59, Asp80, and Met124 together coordinate S-adenosyl-L-methionine.

Belongs to the methyltransferase superfamily. UbiG/COQ3 family.

It catalyses the reaction a 3-demethylubiquinol + S-adenosyl-L-methionine = a ubiquinol + S-adenosyl-L-homocysteine + H(+). The catalysed reaction is a 3-(all-trans-polyprenyl)benzene-1,2-diol + S-adenosyl-L-methionine = a 2-methoxy-6-(all-trans-polyprenyl)phenol + S-adenosyl-L-homocysteine + H(+). It functions in the pathway cofactor biosynthesis; ubiquinone biosynthesis. Its function is as follows. O-methyltransferase that catalyzes the 2 O-methylation steps in the ubiquinone biosynthetic pathway. The sequence is that of Ubiquinone biosynthesis O-methyltransferase from Shewanella sp. (strain MR-4).